A 1066-amino-acid chain; its full sequence is MTDQENNNNISSNPFAALFGSLADAKQFAAIHKEQLKQQSDELPASPDDSDNSVSESLDEFDYSVSEISRSFRTHQEMCEQLNINHMIQRIFLITLDNSDPNLKSGNGIPSRCVYLEEMAVELEDQDWLDMSNVEQAIFARLLLQDPGNHLISMTSSATLNLSADRDAGERHIFCYLYSCFQRAKEEITKVPENLLPFAVQCRNLTVSNTRTVLLTPEIYVDQNIHEQLVDLMLEAIQGAHFEDVTEFLEEVIEALLLDEEVRTFPEVMIPVFDILLGRIKDLELCQILLYAYLDILLYFTRQKDMAKVFLEYIQPKDPSNGQMYQKTLLGVILNISCLLKTPGVVENHGFFLNPSRSSPQEIKVQEANIHQFMAQFHEKIYQMLKNLLQLSPETKHGILFWLGNCLHANAGRTKIWANQMPEIFFQMYASDAFFLNLGAALLKLCQPFCKPRSSRLLTFNPTYCVLKDLNDEERKIKSVHMRGLDKETCLIPAVQEPVFPQSYNLVTENLALTEYTLYLGFHRLHDQMVKINQNLHRLQVAWRDAQQSSSPAADNLREQFERLMTIYLSTKTAMTEPQMLQNCLNLQVSMAVLLVQLAIGNEGSQPIELSFPLPDGYSSLAYVPEFFADNLGDFLIFLRRFAEDILETSADSLEHVLHFITIFTGSIERMKNPHLRAKLAEVLEAVMPHLDQTPSPLVSSVFHRKRVFCNFPYAPQLSEALIKVFVDIEFTGDPHQFEQKFNYRRPMYPILRYMWGTDSYRESIKDLADYASKNLEAMNPPLFLRFLNLLMNDAIFLLDEAIQYLSKIKIQQIEKDRGEWESLTPEARREKEAGLQMFGQLARFHNIMSNETIGTLSFLTSEIKSLFVHPFLAERIISMLNYFLQHLVGPKMGALKVKDFSEFDFKPQQLVSDICTIYLNLGDEENFCATVPKDGRSYSPTLFAQTVRVLKKINKPGNMIVAFSNLAERIKSLADLQQQEEETYADACDEFLDPIMSTLMSDPVVLPSSRVTVDGSTIARHLLSDQTDPFNRSPLTMDQIRPNTELKEKIQRWLAERKQQKEQLE.

Residues 35–57 form a disordered region; it reads QLKQQSDELPASPDDSDNSVSES. Lys-386 is subject to N6-acetyllysine. Residues 987-1061 enclose the U-box domain; sequence DACDEFLDPI…QRWLAERKQQ (75 aa).

The protein belongs to the ubiquitin conjugation factor E4 family.

It is found in the cytoplasm. The catalysed reaction is S-ubiquitinyl-[E2 ubiquitin-conjugating enzyme]-L-cysteine + [acceptor protein]-L-lysine = [E2 ubiquitin-conjugating enzyme]-L-cysteine + N(6)-ubiquitinyl-[acceptor protein]-L-lysine.. It participates in protein modification; protein ubiquitination. Functionally, ubiquitin-protein ligase that probably functions as an E3 ligase in conjunction with specific E1 and E2 ligases. May also function as an E4 ligase mediating the assembly of polyubiquitin chains on substrates ubiquitinated by another E3 ubiquitin ligase. Mediates 'Lys-48'-linked polyubiquitination of substrates. This chain is Ubiquitin conjugation factor E4 A, found in Rattus norvegicus (Rat).